The primary structure comprises 303 residues: Coenzyme PQQ synthesis protein B (303 aa).

Belongs to the PqqB family.

It functions in the pathway cofactor biosynthesis; pyrroloquinoline quinone biosynthesis. Its function is as follows. May be involved in the transport of PQQ or its precursor to the periplasm. The sequence is that of Coenzyme PQQ synthesis protein B from Acinetobacter baumannii (strain SDF).